We begin with the raw amino-acid sequence, 91 residues long: DNA-directed RNA polymerase subunit omega (91 aa).

It belongs to the RNA polymerase subunit omega family. As to quaternary structure, the RNAP catalytic core consists of 2 alpha, 1 beta, 1 beta' and 1 omega subunit. When a sigma factor is associated with the core the holoenzyme is formed, which can initiate transcription.

It catalyses the reaction RNA(n) + a ribonucleoside 5'-triphosphate = RNA(n+1) + diphosphate. In terms of biological role, promotes RNA polymerase assembly. Latches the N- and C-terminal regions of the beta' subunit thereby facilitating its interaction with the beta and alpha subunits. The polypeptide is DNA-directed RNA polymerase subunit omega (Syntrophus aciditrophicus (strain SB)).